Here is a 205-residue protein sequence, read N- to C-terminus: Translation initiation factor 2 subunit beta (205 aa).

The TRAM domain occupies 145–203 (GIEIGKEYTVTIESTGSAGEGIARYQGYTIYVPKAKKGERVKIIIRKIKRNVAIAELAD).

This sequence belongs to the eIF-2-beta/eIF-5 family. Heterotrimer composed of an alpha, a beta and a gamma chain.

Functionally, eIF-2 functions in the early steps of protein synthesis by forming a ternary complex with GTP and initiator tRNA. This is Translation initiation factor 2 subunit beta from Picrophilus torridus (strain ATCC 700027 / DSM 9790 / JCM 10055 / NBRC 100828 / KAW 2/3).